The following is a 261-amino-acid chain: Cytochrome c oxidase subunit 3 (261 aa).

The Mitochondrial matrix portion of the chain corresponds to 1–15 (MTKQMHAFHMVNPSP). Residues 16-34 (WPLTGAASAFMLTSGLAMW) form a helical membrane-spanning segment. At 35–40 (FHKHSN) the chain is on the mitochondrial intermembrane side. The chain crosses the membrane as a helical span at residues 41–66 (TLIFLSMILMLLTMYQWWRDITREGT). Residues 67–72 (FQGHHT) lie on the Mitochondrial matrix side of the membrane. The helical transmembrane segment at 73–105 (SLVQKSLRYGMILFIVSEVCFFFGFFWTFYHSS) threads the bilayer. Residues 106-128 (LSPSPDLGMMWPPKGVIPLDPFE) lie on the Mitochondrial intermembrane side of the membrane. A helical membrane pass occupies residues 129–152 (IPLLNTAILLGSGVSVTWAHHSLM). Topologically, residues 153-155 (EKT) are mitochondrial matrix. A helical membrane pass occupies residues 156–183 (HKDMVISLSITIILGIYFTLLQGMEYFN). Residues 184–190 (STFNISD) are Mitochondrial intermembrane-facing. A helical membrane pass occupies residues 191-223 (NAYGSTFFVATGFHGGHVIIGTLFLTVCLLRQL). The Mitochondrial matrix segment spans residues 224–232 (MFHFTSSHH). The helical transmembrane segment at 233–256 (FGFEAAAWYWHFVDVVWLFLFISI) threads the bilayer. The Mitochondrial intermembrane segment spans residues 257 to 261 (YWWGS).

Belongs to the cytochrome c oxidase subunit 3 family. Component of the cytochrome c oxidase (complex IV, CIV), a multisubunit enzyme composed of 14 subunits. The complex is composed of a catalytic core of 3 subunits MT-CO1, MT-CO2 and MT-CO3, encoded in the mitochondrial DNA, and 11 supernumerary subunits COX4I, COX5A, COX5B, COX6A, COX6B, COX6C, COX7A, COX7B, COX7C, COX8 and NDUFA4, which are encoded in the nuclear genome. The complex exists as a monomer or a dimer and forms supercomplexes (SCs) in the inner mitochondrial membrane with NADH-ubiquinone oxidoreductase (complex I, CI) and ubiquinol-cytochrome c oxidoreductase (cytochrome b-c1 complex, complex III, CIII), resulting in different assemblies (supercomplex SCI(1)III(2)IV(1) and megacomplex MCI(2)III(2)IV(2)).

Its subcellular location is the mitochondrion inner membrane. The catalysed reaction is 4 Fe(II)-[cytochrome c] + O2 + 8 H(+)(in) = 4 Fe(III)-[cytochrome c] + 2 H2O + 4 H(+)(out). In terms of biological role, component of the cytochrome c oxidase, the last enzyme in the mitochondrial electron transport chain which drives oxidative phosphorylation. The respiratory chain contains 3 multisubunit complexes succinate dehydrogenase (complex II, CII), ubiquinol-cytochrome c oxidoreductase (cytochrome b-c1 complex, complex III, CIII) and cytochrome c oxidase (complex IV, CIV), that cooperate to transfer electrons derived from NADH and succinate to molecular oxygen, creating an electrochemical gradient over the inner membrane that drives transmembrane transport and the ATP synthase. Cytochrome c oxidase is the component of the respiratory chain that catalyzes the reduction of oxygen to water. Electrons originating from reduced cytochrome c in the intermembrane space (IMS) are transferred via the dinuclear copper A center (CU(A)) of subunit 2 and heme A of subunit 1 to the active site in subunit 1, a binuclear center (BNC) formed by heme A3 and copper B (CU(B)). The BNC reduces molecular oxygen to 2 water molecules using 4 electrons from cytochrome c in the IMS and 4 protons from the mitochondrial matrix. In Myxine glutinosa (Atlantic hagfish), this protein is Cytochrome c oxidase subunit 3 (MT-CO3).